Reading from the N-terminus, the 781-residue chain is Arf-GAP with coiled-coil, ANK repeat and PH domain-containing protein 2 (781 aa).

The region spanning 1 to 226 is the BAR domain; sequence MKVTVDFEEC…MKDLGAQLDQ (226 aa). Positions 266–361 constitute a PH domain; it reads GIVMEGYLFK…WIKAVQTSIA (96 aa). Residues 365-378 are compositionally biased toward basic and acidic residues; it reads REKGDESEKQEKKS. Positions 365–390 are disordered; sequence REKGDESEKQEKKSSPSTGSLESGSE. Over residues 379 to 388 the composition is skewed to low complexity; it reads SPSTGSLESG. The region spanning 399 to 521 is the Arf-GAP domain; sequence ESALQRVQCI…KFVEKQPAAA (123 aa). The segment at 414-437 adopts a C4-type zinc-finger fold; it reads CCDCGLADPRWASINLGITLCIEC. The disordered stretch occupies residues 520-576; sequence AAVSPLESRTKVLPQSQEEKRHSAPEKSFLAIEQGAASPRVRSSDSGIQQSVDDSRE. ANK repeat units follow at residues 642–671, 675–704, and 708–737; these read NKATPLIQAVRGGSLVTCEFLLQNGANVNI, KGRGPLHHATVLGHTGQVCLFLKRGANQHA, and DGKDPLSIAVEAANADIVTLLRLARMNEEM.

It localises to the endosome membrane. The protein localises to the cell membrane. With respect to regulation, GAP activity stimulated by phosphatidylinositol 4,5-bisphosphate (PIP2) and phosphatidic acid. Its function is as follows. GTPase-activating protein (GAP) for ADP ribosylation factor 6 (ARF6). The polypeptide is Arf-GAP with coiled-coil, ANK repeat and PH domain-containing protein 2 (ACAP2) (Gallus gallus (Chicken)).